The following is a 90-amino-acid chain: Cyclin-dependent kinases regulatory subunit 1 (90 aa).

This sequence belongs to the CKS family.

Functionally, binds to the catalytic subunit of the cyclin dependent kinases and is essential for their biological function. The chain is Cyclin-dependent kinases regulatory subunit 1 (CKS1) from Oryza sativa subsp. indica (Rice).